The sequence spans 227 residues: Max dimerization protein 1 (227 aa).

The Nuclear localization signal motif lies at 21 to 48 (RREREAEHGYASMLPYSKDRDAFKRRNK). Disordered stretches follow at residues 30–66 (YASM…MEKN), 142–161 (MDSV…REEL), and 184–227 (GWSS…GLGL). In terms of domain architecture, bHLH spans 55-107 (SSRSTHNEMEKNRRAHLRLCLEKLKGLVPLGPESSRHTTLSLLTKAKLHIKKL). Over residues 198-211 (MQSLGSDEGYSSAT) the composition is skewed to polar residues. Residues 216-227 (KLQDGHKAGLGL) show a composition bias toward basic and acidic residues.

Heterodimer with MAX; the interaction is required for DNA-binding. DNA binding requires dimerization with another bHLH protein; does not form homodimers, and does not bind to DNA in the absence of MAX in vitro. Interacts with RNF17. Ubiquitinated by BIRC2/c-IAP1, leading to its subsequent degradation by the proteasome.

The protein localises to the nucleus. Its function is as follows. Component of a transcriptional repressor complex together with MAX. In complex with MAX binds to the core DNA sequence 5'-CAC[GA]TG-3'. Antagonizes MYC transcriptional activity by competing with MYC for MAX binding. Binds to the TERT promoter and represses telomerase expression, possibly by interfering with MYC binding. This is Max dimerization protein 1 (Mxd1) from Mus musculus (Mouse).